Reading from the N-terminus, the 707-residue chain is Nucleolin (707 aa).

The disordered stretch occupies residues 1-308; the sequence is MVKLAKAGKT…KVEGSEPTTP (308 aa). An N6-acetyllysine mark is found at lysine 9, lysine 15, and lysine 16. Residues 24-46 are compositionally biased toward acidic residues; sequence VEEDSEDEEMSEDEDDSSGEEEV. Serine 28, serine 34, serine 40, and serine 41 each carry phosphoserine. The segment covering 56-92 has biased composition (low complexity); sequence ATTTPAKKVVVSQTKKAAVPTPAKKAAVTPGKKAVAT. The stretch at 58 to 65 is repeat 1; it reads TTPAKKVV. Positions 58 to 135 are 8 X 8 AA tandem repeats of X-T-P-X-K-K-X-X; the sequence is TTPAKKVVVS…GAATPAKGAK (78 aa). Serine 67 bears the Phosphoserine mark. Phosphothreonine occurs at positions 69, 76, 84, and 92. 3 repeat units span residues 75 to 82, 83 to 90, and 91 to 98. At lysine 96 the chain carries N6-acetyllysine. Threonine 99 bears the Phosphothreonine mark. A 5; truncated repeat occupies 99–104; it reads TPAKVI. N6-acetyllysine is present on lysine 102. Residues 105-112 form repeat 6; the sequence is PTPGKKGA. Threonine 106 is modified (phosphothreonine). N6-acetyllysine is present on residues lysine 109 and lysine 116. Repeat copies occupy residues 120–127 and 128–135. Phosphothreonine is present on threonine 121. Residues 121 to 137 show a composition bias toward low complexity; sequence TPGKKGAATPAKGAKNG. An N6-acetyllysine modification is found at lysine 124. Residues serine 145 and serine 157 each carry the phosphoserine modification. The segment covering 145–170 has biased composition (acidic residues); that stretch reads SDEDEDEEDEDDSDEDEDDEEEDEFE. Positions 179–188 are enriched in low complexity; it reads PAKAAPAAPA. Serine 189 and serine 212 each carry phosphoserine. Acidic residues predominate over residues 189-217; that stretch reads SEDEEDDEDEDDEEDDDEEEEDDSEEEVM. Residue threonine 220 is modified to Phosphothreonine. The segment covering 241–273 has biased composition (acidic residues); that stretch reads EEEDDEEEDEDDEDEDDEEEDDEDDDEEEEEEE. Positions 286 to 302 are enriched in basic and acidic residues; sequence MTKQKEAPEAKKQKVEG. Residue lysine 299 forms a Glycyl lysine isopeptide (Lys-Gly) (interchain with G-Cter in SUMO1); alternate linkage. Lysine 299 is covalently cross-linked (Glycyl lysine isopeptide (Lys-Gly) (interchain with G-Cter in SUMO2); alternate). Phosphoserine is present on serine 303. 2 RRM domains span residues 309–385 and 395–468; these read FNLF…KPKG and RTLL…YTGE. An N6-acetyllysine modification is found at lysine 320. A Glycyl lysine isopeptide (Lys-Gly) (interchain with G-Cter in SUMO1); alternate cross-link involves residue lysine 326. Lysine 326 is covalently cross-linked (Glycyl lysine isopeptide (Lys-Gly) (interchain with G-Cter in SUMO2); alternate). Lysine 350 is subject to N6-acetyllysine. A Phosphoserine modification is found at serine 358. At threonine 369 the chain carries Phosphothreonine. Lysine 372 participates in a covalent cross-link: Glycyl lysine isopeptide (Lys-Gly) (interchain with G-Cter in SUMO2). Lysine 379 is covalently cross-linked (Glycyl lysine isopeptide (Lys-Gly) (interchain with G-Cter in SUMO2); alternate). N6-acetyllysine; alternate is present on lysine 379. Lysine 400 bears the N6-acetyllysine mark. Serine 403 is modified (phosphoserine). At threonine 407 the chain carries Phosphothreonine. Lysine 429 and lysine 446 each carry N6-acetyllysine. Residues serine 460 and serine 462 each carry the phosphoserine modification. Lysine 469 and lysine 478 each carry N6-acetyllysine. RRM domains lie at 487 to 561 and 569 to 644; these read KTLV…LQGS and KTLF…WAKP. Lysine 514 is covalently cross-linked (Glycyl lysine isopeptide (Lys-Gly) (interchain with G-Cter in SUMO2); alternate). At lysine 514 the chain carries N6-acetyllysine; alternate. N6-acetyllysine occurs at positions 522 and 569. Residue lysine 574 forms a Glycyl lysine isopeptide (Lys-Gly) (interchain with G-Cter in SUMO2); alternate linkage. Lysine 574 bears the N6-acetyllysine; alternate mark. Phosphoserine is present on serine 577. Lysine 586 participates in a covalent cross-link: Glycyl lysine isopeptide (Lys-Gly) (interchain with G-Cter in SUMO1); alternate. Lysine 586 is covalently cross-linked (Glycyl lysine isopeptide (Lys-Gly) (interchain with G-Cter in SUMO2); alternate). Serine 588 and serine 616 each carry phosphoserine. Lysine 621 is covalently cross-linked (Glycyl lysine isopeptide (Lys-Gly) (interchain with G-Cter in SUMO2)). Residues 639–707 form a disordered region; sequence LDWAKPKGEG…KPQGKKTKFE (69 aa). An N6-acetyllysine modification is found at lysine 643. The segment covering 647 to 696 has biased composition (gly residues); it reads EGGFGGRGGGRGGFGGRGGGRGGRGGFGGRGRGGFGGRGGFRGGRGGGGD. Residues arginine 653, arginine 657, arginine 663, arginine 667, arginine 670, arginine 676, arginine 678, arginine 684, and arginine 688 each carry the asymmetric dimethylarginine modification. Arginine 691 carries the post-translational modification Asymmetric dimethylarginine; alternate. The residue at position 691 (arginine 691) is an Omega-N-methylarginine; alternate.

Identified in a IGF2BP1-dependent mRNP granule complex containing untranslated mRNAs. Component of the SWAP complex that consists of NPM1, NCL/nucleolin, PARP1 and SWAP70. Component of a complex which is at least composed of HTATSF1/Tat-SF1, the P-TEFb complex components CDK9 and CCNT1, RNA polymerase II, SUPT5H, and NCL/nucleolin. Interacts with AICDA. Interacts with APTX. Interacts with C1QBP. Interacts with ERBB4. Interacts (via C-terminus) with FMR1 isoform 6 (via N-terminus). Interacts with GZF1; this interaction is important for nucleolar localization of GZF1. Interacts with NSUN2. Interacts with NVL. Interacts (via N-terminus domain) with SETX. Interacts (via RRM1 and C-terminal RRM4/Arg/Gly-rich domains) with TERT; the interaction is important for nucleolar localization of TERT. Interacts with WDR46. Interacts with ZFP36. Interacts with LRRC34. Interacts with RRP1B. Interacts with HNRNPU; this interaction occurs during mitosis. Interacts with RIOK1; RIOK1 recruits NCL to PRMT5 for symmetrically methylation. Interacts with ZBTB7B. Interacts with MDK; this interaction promotes NCL clustering and lateral movements of this complex into lipid rafts leading to MDK internalization. Interacts with HDGF. Interacts with ALKBH2. Interacts with IGFBP5; this interaction is necessary for IGFBP5 localization to the nucleus. Interacts with DDX24 (when ubiquitinated); this interaction may be important during ribosome biogenesis. Some glutamate residues are glycylated by TTLL8. This modification occurs exclusively on glutamate residues and results in a glycine chain on the gamma-carboxyl group. In terms of processing, symmetrically methylated by PRMT5. Expressed in B-cells that have been induced to switch to various Ig isotypes.

It localises to the nucleus. It is found in the nucleolus. The protein localises to the cytoplasm. Functionally, nucleolin is the major nucleolar protein of growing eukaryotic cells. It is found associated with intranucleolar chromatin and pre-ribosomal particles. It induces chromatin decondensation by binding to histone H1. It is thought to play a role in pre-rRNA transcription and ribosome assembly. May play a role in the process of transcriptional elongation. Binds RNA oligonucleotides with 5'-UUAGGG-3' repeats more tightly than the telomeric single-stranded DNA 5'-TTAGGG-3' repeats. This Mus musculus (Mouse) protein is Nucleolin (Ncl).